The sequence spans 342 residues: Photosystem II assembly lipoprotein Ycf48 (342 aa).

A signal peptide spans 1–28; that stretch reads MPVKFPSLKFEQLKQLVLVAAIAVFCVS. A lipid anchor (N-palmitoyl cysteine) is attached at Cys-29. Cys-29 carries the S-diacylglycerol cysteine lipid modification. Positions 196 to 220 match the Arg-rich patch motif; that stretch reads RGNFYSTWAPGQTEWTPHNRNSSRR. A propeptide spanning residues 340 to 342 is cleaved from the precursor; that stretch reads MVP.

It belongs to the Ycf48 family. As to quaternary structure, part of early PSII assembly complexes which includes D1 (psbA) and PsbI; not found in mature PSII. By two-hybrid analysis in yeast interacts with precursor and intermediate forms of D1, but less with mature D1. Binds to the lumenal side of PSI and PSII complexes. Coimmunoprecipitates with YidC. Purified chlorophyll- and carotenoid-containing photosystem II (PSII) assembly intermediate complex RCII* (iD1, D1, D2, PsbE, PsbF, PsbI, Ycf39, Ycf48, HliC and HliD). The last 3 residues are removed in the mature protein.

It localises to the cellular thylakoid membrane. A factor required for optimal assembly of photosystem II (PSII) which acts in the early stages of PSII assembly. Also plays a role in replacement of photodamaged D1 (psbA). May interact with precursor D1 to prevent its premature processing before association with D2 (psbD). May also play a role in chlorophyll insertion into chlorophyll-binding proteins. Increasing levels of chlorophyll precursors partially suppresses deletion of this protein, supporting the idea that Ycf48 assists YidC in synthesis of chlorophyll-binding proteins. The Ycf39-Hlip complex binds D1 at an early stage of PSII assembly along with Ycf48, ribosomes and ChlG, the last enzyme in chlorophyll biosynthesis; it may be involved in chlorophyll reuse and delivery to D1 in the initial stages of PSII assembly. This chain is Photosystem II assembly lipoprotein Ycf48, found in Synechocystis sp. (strain ATCC 27184 / PCC 6803 / Kazusa).